Reading from the N-terminus, the 153-residue chain is Arachidonate 5-lipoxygenase-activating protein (153 aa).

Residues methionine 1–asparagine 8 are Lumenal-facing. The chain crosses the membrane as a helical span at residues isoleucine 9–valine 30. Residues glutamate 31 to arginine 52 lie on the Cytoplasmic side of the membrane. A helical transmembrane segment spans residues valine 53–leucine 77. At cysteine 78 to glutamine 80 the chain is on the lumenal side. The helical transmembrane segment at valine 81–leucine 102 threads the bilayer. The Cytoplasmic segment spans residues glycine 103 to glutamine 107. An intramembrane segment occupies serine 108 to glycine 115. Residues lysine 116–alanine 128 traverse the membrane as a helical segment. Topologically, residues glycine 129–threonine 153 are lumenal.

Belongs to the MAPEG family. In terms of assembly, homotrimer. Interacts with LTC4S and ALOX5.

It is found in the nucleus membrane. It localises to the endoplasmic reticulum membrane. Required for leukotriene biosynthesis by ALOX5 (5-lipoxygenase). Anchors ALOX5 to the membrane. Binds arachidonic acid, and could play an essential role in the transfer of arachidonic acid to ALOX5. Binds to MK-886, a compound that blocks the biosynthesis of leukotrienes. The polypeptide is Arachidonate 5-lipoxygenase-activating protein (ALOX5AP) (Ovis aries (Sheep)).